Reading from the N-terminus, the 418-residue chain is MTLLALGINHKTAPVSLRERVSFSPDKLDQALDSLLAQPMVQGGVVLSTCNRTELYLSVEEQDNLQEALIRWLCDYHNLNEEDLRKSLYWHQDNDAVSHLMRVASGLDSLVLGEPQILGQVKKAFVDSQKGHMKASELERMFQKSFSVAKRVRTETDIGASAVSVAFAACTLARQIFESLSTVTVLLVGAGETIELVARHLREHKVQKMIIANRTRERAQILADEVGAEVIALSEIDERLREADIIISSTASPLPIIGKGMVERALKSRRNQPMLLVDIAVPRDVEPEVGKLANAYLYSVDDLQSIISHNLAQRKAAAVEAETIVAQETSEFMAWLRAQSASETIREYRSQAEHVRDELTAKALAALEQGGDAQAIMQDLAWKLTNRLIHAPTKSLQQAARDGDNERLNILRDSLGLE.

Substrate contacts are provided by residues 49-52 (TCNR), serine 109, 114-116 (EPQ), and glutamine 120. Catalysis depends on cysteine 50, which acts as the Nucleophile. 189-194 (GAGETI) contacts NADP(+).

Belongs to the glutamyl-tRNA reductase family. In terms of assembly, homodimer.

The enzyme catalyses (S)-4-amino-5-oxopentanoate + tRNA(Glu) + NADP(+) = L-glutamyl-tRNA(Glu) + NADPH + H(+). Its pathway is porphyrin-containing compound metabolism; protoporphyrin-IX biosynthesis; 5-aminolevulinate from L-glutamyl-tRNA(Glu): step 1/2. Functionally, catalyzes the NADPH-dependent reduction of glutamyl-tRNA(Glu) to glutamate 1-semialdehyde (GSA). This is Glutamyl-tRNA reductase from Shigella flexneri.